The chain runs to 563 residues: IQCJ-SCHIP1 readthrough transcript protein (563 aa).

Residues 47 to 67 enclose the IQ domain; that stretch reads ESKVKIIQRAWREYLQRQEPL. Disordered regions lie at residues 63–150, 164–295, 312–336, and 384–430; these read RQEP…VSAL, VIDE…EPPV, FREQ…NERE, and SGSD…SLDD. Residues 76–87 are compositionally biased toward low complexity; sequence SVSSEKLSSSVS. Residues 88–97 are compositionally biased toward polar residues; it reads MNTFSDSSTP. Over residues 108–143 the composition is skewed to low complexity; sequence SDAGSSSSSSRASSQSNSTKVTPCSECKSSSSPGGS. Residues 168–182 are compositionally biased toward acidic residues; the sequence is WAPEEDGEEEEEEDE. Basic and acidic residues-rich tracts occupy residues 183–199 and 229–238; these read RDQR…REPG and HQHDPQDLRH. S193 carries the post-translational modification Phosphoserine. Polar residues predominate over residues 318-331; that stretch reads RNQGQARTNSTSAQ. Residues 385 to 399 are compositionally biased toward basic and acidic residues; sequence GSDKDSDADDSKTET. The span at 400 to 411 shows a compositional bias: polar residues; sequence SLDTPLSPMSKQ. A required for interaction with ankyrins region spans residues 419 to 563; sequence DTTEEESESL…KHMAEKMPAK (145 aa). Over residues 420–430 the composition is skewed to acidic residues; sequence TTEEESESLDD. A coiled-coil region spans residues 500-534; that stretch reads IGQLQVIVNDLHSQIESLNEELVQLLLIRDELHTE.

Homooligomer (via coiled coil domain). Interacts (via IQ domain) with calmodulin; the interaction is direct and lost in presence of calcium. Interacts with ANK3 (via ANK repeats); required for localization at axon initial segments (AIS) and nodes of Ranvier. Interacts with SPTBN4. Interacts with KCNQ2 and KCNQ3. As to expression, highly expressed in brain and to a lower extent in heart and kidney.

The protein localises to the cell projection. The protein resides in the axon. It localises to the cytoplasm. May play a role in action potential conduction in myelinated cells through the organization of molecular complexes at nodes of Ranvier and axon initial segments. May also play a role in axon outgrowth and guidance. This chain is IQCJ-SCHIP1 readthrough transcript protein, found in Homo sapiens (Human).